The chain runs to 135 residues: UPF0738 protein Aflv_2116 (135 aa).

The protein belongs to the UPF0738 family.

The chain is UPF0738 protein Aflv_2116 from Anoxybacillus flavithermus (strain DSM 21510 / WK1).